A 135-amino-acid chain; its full sequence is Ribosome-binding factor A (135 aa).

This sequence belongs to the RbfA family. Monomer. Binds 30S ribosomal subunits, but not 50S ribosomal subunits or 70S ribosomes.

The protein localises to the cytoplasm. In terms of biological role, one of several proteins that assist in the late maturation steps of the functional core of the 30S ribosomal subunit. Associates with free 30S ribosomal subunits (but not with 30S subunits that are part of 70S ribosomes or polysomes). Required for efficient processing of 16S rRNA. May interact with the 5'-terminal helix region of 16S rRNA. The protein is Ribosome-binding factor A of Caldicellulosiruptor saccharolyticus (strain ATCC 43494 / DSM 8903 / Tp8T 6331).